A 467-amino-acid polypeptide reads, in one-letter code: Glutamate--tRNA ligase (467 aa).

Residues 10 to 20 (PSPTGYLHVGG) carry the 'HIGH' region motif. The 'KMSKS' region motif lies at 238 to 242 (RLSKR). Residue Lys241 participates in ATP binding.

Belongs to the class-I aminoacyl-tRNA synthetase family. Glutamate--tRNA ligase type 1 subfamily. In terms of assembly, monomer.

It is found in the cytoplasm. The catalysed reaction is tRNA(Glu) + L-glutamate + ATP = L-glutamyl-tRNA(Glu) + AMP + diphosphate. Functionally, catalyzes the attachment of glutamate to tRNA(Glu) in a two-step reaction: glutamate is first activated by ATP to form Glu-AMP and then transferred to the acceptor end of tRNA(Glu). In Citrifermentans bemidjiense (strain ATCC BAA-1014 / DSM 16622 / JCM 12645 / Bem) (Geobacter bemidjiensis), this protein is Glutamate--tRNA ligase.